The primary structure comprises 183 residues: Ly6/PLAUR domain-containing protein 6B (183 aa).

Positions 1-39 (MLYKSSDRPAHKVSMLLLCHALAIAVVQIVIFSESWAFA) are cleaved as a signal peptide. The UPAR/Ly6 domain maps to 60 to 151 (FKCFTCENAG…VELPTNHTNA (92 aa)). Positions 60 to 154 (FKCFTCENAG…PTNHTNAVFA (95 aa)) are sufficient for inhibiting alpha-7 nAChR currents. 6 disulfides stabilise this stretch: Cys62–Cys90, Cys65–Cys74, Cys83–Cys109, Cys115–Cys134, Cys120–Cys131, and Cys135–Cys140. Ser164 is lipidated: GPI-anchor amidated serine. Positions 165 to 183 (SAPTLYLPVLAWVFVLPLL) are cleaved as a propeptide — removed in mature form.

Its subcellular location is the cell membrane. Its function is as follows. Likely acts as a modulator of nicotinic acetylcholine receptors (nAChRs) activity. In vitro acts on nAChRs in a subtype- and stoichiometry-dependent manner. Modulates specifically alpha-3(3):beta-4(2) nAChRs by enhancing the sensitivity to ACh, decreasing ACh-induced maximal current response and increasing the rate of desensitization to ACh; has no effect on alpha-7 homomeric nAChRs; modulates alpha-3(2):alpha-5:beta-4(2) nAChRs in the context of CHRNA5/alpha-5 variant Asn-398 but not its wild-type sequence. However, according to another report in vitro it can weakly inhibits alpha-7 nAChRs. The sequence is that of Ly6/PLAUR domain-containing protein 6B (LYPD6B) from Homo sapiens (Human).